The sequence spans 426 residues: DUF724 domain-containing protein 9 (426 aa).

Polar residues-rich tracts occupy residues 164-184 (ESSLTQGSGDETSDSVRNANE) and 213-222 (PRNQNASVND). Positions 164 to 248 (ESSLTQGSGD…REESLCSDAS (85 aa)) are disordered. Residues 223 to 242 (STRENENSEDINRKRKREES) show a composition bias toward basic and acidic residues. The DUF724 domain maps to 256-425 (LPFEKKLSIW…LQFQTTASAP (170 aa)). A coiled-coil region spans residues 370–402 (AEKESIKIENERKILELQRLNEEVDKEIAQSKS).

As to expression, expressed in flowers.

Its subcellular location is the nucleus. Functionally, may be involved in the polar growth of plant cells via transportation of RNAs. The protein is DUF724 domain-containing protein 9 of Arabidopsis thaliana (Mouse-ear cress).